An 823-amino-acid polypeptide reads, in one-letter code: DNA mismatch repair protein MutS (823 aa).

An ATP-binding site is contributed by 605–612 (GPNMSGKS).

The protein belongs to the DNA mismatch repair MutS family.

In terms of biological role, this protein is involved in the repair of mismatches in DNA. It is possible that it carries out the mismatch recognition step. This protein has a weak ATPase activity. This is DNA mismatch repair protein MutS from Fervidobacterium nodosum (strain ATCC 35602 / DSM 5306 / Rt17-B1).